Consider the following 182-residue polypeptide: Lipoprotein signal peptidase (182 aa).

3 helical membrane-spanning segments follow: residues 12–32 (VAVF…TKAW), 68–88 (ATWV…VAGV), and 91–111 (VSMK…GNLI). Residues D127 and D140 contribute to the active site. The helical transmembrane segment at 135-155 (VGNVADIYLVVAGVVLVILIL) threads the bilayer.

This sequence belongs to the peptidase A8 family.

The protein resides in the cell membrane. It catalyses the reaction Release of signal peptides from bacterial membrane prolipoproteins. Hydrolyzes -Xaa-Yaa-Zaa-|-(S,diacylglyceryl)Cys-, in which Xaa is hydrophobic (preferably Leu), and Yaa (Ala or Ser) and Zaa (Gly or Ala) have small, neutral side chains.. It participates in protein modification; lipoprotein biosynthesis (signal peptide cleavage). In terms of biological role, this protein specifically catalyzes the removal of signal peptides from prolipoproteins. The protein is Lipoprotein signal peptidase of Bifidobacterium longum (strain DJO10A).